Consider the following 748-residue polypeptide: Polyribonucleotide nucleotidyltransferase (748 aa).

Residues D522 and D528 each contribute to the Mg(2+) site. A KH domain is found at 588–647 (PRVTTIRVPVDKIGEVIGPKGKIINAITEETGAQISIEDDGTVFVGATDGPSAQAAIDRI). In terms of domain architecture, S1 motif spans 659–728 (GERFLGTVVK…KRGKISLVLV (70 aa)).

This sequence belongs to the polyribonucleotide nucleotidyltransferase family. Requires Mg(2+) as cofactor.

It localises to the cytoplasm. It catalyses the reaction RNA(n+1) + phosphate = RNA(n) + a ribonucleoside 5'-diphosphate. Involved in mRNA degradation. Catalyzes the phosphorolysis of single-stranded polyribonucleotides processively in the 3'- to 5'-direction. This Mycobacterium avium (strain 104) protein is Polyribonucleotide nucleotidyltransferase.